Here is a 281-residue protein sequence, read N- to C-terminus: Pantothenate synthetase (281 aa).

17 to 24 lines the ATP pocket; it reads MGFLHEGH. H24 (proton donor) is an active-site residue. A (R)-pantoate-binding site is contributed by Q48. Residue Q48 coordinates beta-alanine. 134 to 137 is a binding site for ATP; that stretch reads GEKD. Q140 is a binding site for (R)-pantoate. ATP-binding positions include V163 and 176 to 179; that span reads LSSR.

The protein belongs to the pantothenate synthetase family. Homodimer.

It is found in the cytoplasm. The catalysed reaction is (R)-pantoate + beta-alanine + ATP = (R)-pantothenate + AMP + diphosphate + H(+). Its pathway is cofactor biosynthesis; (R)-pantothenate biosynthesis; (R)-pantothenate from (R)-pantoate and beta-alanine: step 1/1. In terms of biological role, catalyzes the condensation of pantoate with beta-alanine in an ATP-dependent reaction via a pantoyl-adenylate intermediate. The sequence is that of Pantothenate synthetase from Deinococcus radiodurans (strain ATCC 13939 / DSM 20539 / JCM 16871 / CCUG 27074 / LMG 4051 / NBRC 15346 / NCIMB 9279 / VKM B-1422 / R1).